A 104-amino-acid polypeptide reads, in one-letter code: Pyrimidine/purine nucleoside phosphorylase (104 aa).

It belongs to the nucleoside phosphorylase PpnP family.

The enzyme catalyses a purine D-ribonucleoside + phosphate = a purine nucleobase + alpha-D-ribose 1-phosphate. It carries out the reaction adenosine + phosphate = alpha-D-ribose 1-phosphate + adenine. It catalyses the reaction cytidine + phosphate = cytosine + alpha-D-ribose 1-phosphate. The catalysed reaction is guanosine + phosphate = alpha-D-ribose 1-phosphate + guanine. The enzyme catalyses inosine + phosphate = alpha-D-ribose 1-phosphate + hypoxanthine. It carries out the reaction thymidine + phosphate = 2-deoxy-alpha-D-ribose 1-phosphate + thymine. It catalyses the reaction uridine + phosphate = alpha-D-ribose 1-phosphate + uracil. The catalysed reaction is xanthosine + phosphate = alpha-D-ribose 1-phosphate + xanthine. Its function is as follows. Catalyzes the phosphorolysis of diverse nucleosides, yielding D-ribose 1-phosphate and the respective free bases. Can use uridine, adenosine, guanosine, cytidine, thymidine, inosine and xanthosine as substrates. Also catalyzes the reverse reactions. In Herminiimonas arsenicoxydans, this protein is Pyrimidine/purine nucleoside phosphorylase.